The primary structure comprises 591 residues: Isocitrate dehydrogenase kinase/phosphatase (591 aa).

Residues 322–328 (APGIRGL) and lysine 343 contribute to the ATP site. Residue aspartate 378 is part of the active site.

This sequence belongs to the AceK family.

Its subcellular location is the cytoplasm. It catalyses the reaction L-seryl-[isocitrate dehydrogenase] + ATP = O-phospho-L-seryl-[isocitrate dehydrogenase] + ADP + H(+). Its function is as follows. Bifunctional enzyme which can phosphorylate or dephosphorylate isocitrate dehydrogenase (IDH) on a specific serine residue. This is a regulatory mechanism which enables bacteria to bypass the Krebs cycle via the glyoxylate shunt in response to the source of carbon. When bacteria are grown on glucose, IDH is fully active and unphosphorylated, but when grown on acetate or ethanol, the activity of IDH declines drastically concomitant with its phosphorylation. The chain is Isocitrate dehydrogenase kinase/phosphatase from Aromatoleum aromaticum (strain DSM 19018 / LMG 30748 / EbN1) (Azoarcus sp. (strain EbN1)).